The sequence spans 159 residues: Phosphoribosylaminoimidazole carboxylase (159 aa).

Ser-11, Asp-14, Ser-38, Lys-41, Gly-67, and Ser-69 together coordinate substrate.

The catalysed reaction is 5-amino-1-(5-phospho-D-ribosyl)imidazole-4-carboxylate + H(+) = 5-amino-1-(5-phospho-beta-D-ribosyl)imidazole + CO2. Its pathway is purine metabolism; IMP biosynthesis via de novo pathway; 5-amino-1-(5-phospho-D-ribosyl)imidazole-4-carboxylate from 5-amino-1-(5-phospho-D-ribosyl)imidazole (carboxylase route): step 1/1. In terms of biological role, catalyzes the reversible conversion of 5-aminoimidazole ribonucleotide (AIR) and CO(2) to 4-carboxy-5-aminoimidazole ribonucleotide (CAIR). Does not accept N5-carboxyaminoimidazole ribonucleotide (N5-CAIR) as a substrate. This chain is Phosphoribosylaminoimidazole carboxylase, found in Treponema denticola (strain ATCC 35405 / DSM 14222 / CIP 103919 / JCM 8153 / KCTC 15104).